The primary structure comprises 129 residues: Large-conductance mechanosensitive channel (129 aa).

3 helical membrane-spanning segments follow: residues Phe-8–Ser-28, Ile-30–Ile-50, and Gly-67–Val-87.

Belongs to the MscL family. Homopentamer.

It is found in the cell membrane. Channel that opens in response to stretch forces in the membrane lipid bilayer. May participate in the regulation of osmotic pressure changes within the cell. In Exiguobacterium sibiricum (strain DSM 17290 / CCUG 55495 / CIP 109462 / JCM 13490 / 255-15), this protein is Large-conductance mechanosensitive channel.